The primary structure comprises 308 residues: Spermidine synthase 1 (308 aa).

The PABS domain maps to 17 to 254 (PGWFSEISPL…GVIGFMLCST (238 aa)). Glutamine 48 provides a ligand contact to S-adenosyl 3-(methylsulfanyl)propylamine. Position 78 (tyrosine 78) interacts with putrescine. Residues glutamine 79, aspartate 103, glutamate 123, 154–155 (DG), and aspartate 173 contribute to the S-adenosyl 3-(methylsulfanyl)propylamine site. The active-site Proton acceptor is aspartate 173. Putrescine is bound by residues 173-176 (DSSD) and tyrosine 242.

It belongs to the spermidine/spermine synthase family.

It catalyses the reaction S-adenosyl 3-(methylsulfanyl)propylamine + putrescine = S-methyl-5'-thioadenosine + spermidine + H(+). The protein operates within amine and polyamine biosynthesis; spermidine biosynthesis; spermidine from putrescine: step 1/1. The chain is Spermidine synthase 1 from Datura stramonium (Jimsonweed).